The primary structure comprises 455 residues: Chromosomal replication initiator protein DnaA (455 aa).

Residues M1–M75 are domain I, interacts with DnaA modulators. Residues M75 to T106 form a domain II region. Residues S107–A321 are domain III, AAA+ region. ATP is bound by residues G151, G153, K154, and T155. The segment at N322 to E455 is domain IV, binds dsDNA.

This sequence belongs to the DnaA family. As to quaternary structure, oligomerizes as a right-handed, spiral filament on DNA at oriC.

The protein localises to the cytoplasm. Functionally, plays an essential role in the initiation and regulation of chromosomal replication. ATP-DnaA binds to the origin of replication (oriC) to initiate formation of the DNA replication initiation complex once per cell cycle. Binds the DnaA box (a 9 base pair repeat at the origin) and separates the double-stranded (ds)DNA. Forms a right-handed helical filament on oriC DNA; dsDNA binds to the exterior of the filament while single-stranded (ss)DNA is stabiized in the filament's interior. The ATP-DnaA-oriC complex binds and stabilizes one strand of the AT-rich DNA unwinding element (DUE), permitting loading of DNA polymerase. After initiation quickly degrades to an ADP-DnaA complex that is not apt for DNA replication. Binds acidic phospholipids. This chain is Chromosomal replication initiator protein DnaA, found in Helicobacter pylori (strain Shi470).